The following is a 72-amino-acid chain: Translation initiation factor IF-1 (72 aa).

Positions 1 to 72 (MAKDDVIQMQ…SRARIVFRAK (72 aa)) constitute an S1-like domain.

The protein belongs to the IF-1 family. In terms of assembly, component of the 30S ribosomal translation pre-initiation complex which assembles on the 30S ribosome in the order IF-2 and IF-3, IF-1 and N-formylmethionyl-tRNA(fMet); mRNA recruitment can occur at any time during PIC assembly.

It is found in the cytoplasm. Functionally, one of the essential components for the initiation of protein synthesis. Stabilizes the binding of IF-2 and IF-3 on the 30S subunit to which N-formylmethionyl-tRNA(fMet) subsequently binds. Helps modulate mRNA selection, yielding the 30S pre-initiation complex (PIC). Upon addition of the 50S ribosomal subunit IF-1, IF-2 and IF-3 are released leaving the mature 70S translation initiation complex. The chain is Translation initiation factor IF-1 from Burkholderia thailandensis (strain ATCC 700388 / DSM 13276 / CCUG 48851 / CIP 106301 / E264).